The primary structure comprises 704 residues: Elongation factor G (704 aa).

Residues 8–290 (ARYRNIGISA…AVIDYLPAPT (283 aa)) form the tr-type G domain. Residues 17-24 (AHIDAGKT), 88-92 (DTPGH), and 142-145 (NKMD) each bind GTP.

The protein belongs to the TRAFAC class translation factor GTPase superfamily. Classic translation factor GTPase family. EF-G/EF-2 subfamily.

The protein localises to the cytoplasm. Functionally, catalyzes the GTP-dependent ribosomal translocation step during translation elongation. During this step, the ribosome changes from the pre-translocational (PRE) to the post-translocational (POST) state as the newly formed A-site-bound peptidyl-tRNA and P-site-bound deacylated tRNA move to the P and E sites, respectively. Catalyzes the coordinated movement of the two tRNA molecules, the mRNA and conformational changes in the ribosome. This is Elongation factor G from Pectobacterium atrosepticum (strain SCRI 1043 / ATCC BAA-672) (Erwinia carotovora subsp. atroseptica).